The primary structure comprises 318 residues: 26 kDa endochitinase 1 (318 aa).

The first 19 residues, 1–19 (MRAFVLFAVVAMAATMAVA), serve as a signal peptide directing secretion. A Chitin-binding type-1 domain is found at 20-59 (EQCGSQAGGATCPNCLCCSRFGWCGSTPYCGDGCQSQCSG). Intrachain disulfides connect C22–C37, C31–C43, C36–C49, C53–C57, C98–C160, C172–C180, and C279–C311. Catalysis depends on E142, which acts as the Proton donor.

It belongs to the glycosyl hydrolase 19 family. Chitinase class I subfamily.

It catalyses the reaction Random endo-hydrolysis of N-acetyl-beta-D-glucosaminide (1-&gt;4)-beta-linkages in chitin and chitodextrins.. Functionally, defense against chitin-containing fungal pathogens. This is 26 kDa endochitinase 1 from Hordeum vulgare (Barley).